Consider the following 66-residue polypeptide: SPbeta prophage-derived uncharacterized protein YosK (66 aa).

The chain is SPbeta prophage-derived uncharacterized protein YosK (yosK) from Bacillus subtilis (strain 168).